We begin with the raw amino-acid sequence, 87 residues long: MGKGRKPTDSETLAHIRDLVAEEKALRAQLRHGGISESEEQQQLRRIEIELDQCWDLLRQRRALRQTGGDPREAVVRPADQVEGYTG.

Positions 67-87 (TGGDPREAVVRPADQVEGYTG) are disordered.

This is an uncharacterized protein from Mycobacterium bovis (strain ATCC BAA-935 / AF2122/97).